Reading from the N-terminus, the 158-residue chain is pH 6 antigen (158 aa).

Residues M1–A26 form the signal peptide.

As to quaternary structure, forms a homomer composed of subunits assembled in a large structure.

Its subcellular location is the fimbrium. In terms of biological role, fibrillar structure, part of fimbriae, necessary for full virulence. The polypeptide is pH 6 antigen (psaA) (Yersinia pestis).